The following is a 183-amino-acid chain: Pyruvoyl-dependent arginine decarboxylase (183 aa).

Position 44 is a pyruvic acid (Ser) (Ser-44).

It belongs to the PdaD family. Pyruvate serves as cofactor.

It catalyses the reaction L-arginine + H(+) = agmatine + CO2. In Nitrosopumilus maritimus (strain SCM1), this protein is Pyruvoyl-dependent arginine decarboxylase.